The primary structure comprises 227 residues: Cytidylate kinase (227 aa).

Position 12–20 (12–20 (GPSGVGKGT)) interacts with ATP.

It belongs to the cytidylate kinase family. Type 1 subfamily.

The protein localises to the cytoplasm. The enzyme catalyses CMP + ATP = CDP + ADP. The catalysed reaction is dCMP + ATP = dCDP + ADP. The polypeptide is Cytidylate kinase (Shewanella denitrificans (strain OS217 / ATCC BAA-1090 / DSM 15013)).